Here is a 695-residue protein sequence, read N- to C-terminus: Zinc finger SWIM domain-containing protein 3 (695 aa).

A disordered region spans residues 434–490 (NAPKLRRTRLPSTPPRPKKPFRICGGGDTRLPVEEVEETKADSAQSQLPQPQDQSSK). Over residues 475–489 (DSAQSQLPQPQDQSS) the composition is skewed to low complexity. The SWIM-type zinc finger occupies 530–571 (VAVQLLENSHQVSKDGCSCSCSFQQCYHLPCRHILALLHTSQ).

This is Zinc finger SWIM domain-containing protein 3 (Zswim3) from Mus musculus (Mouse).